A 294-amino-acid polypeptide reads, in one-letter code: Kynurenine formamidase (294 aa).

Residues 1-14 (MSRWKDMNKDELER) are compositionally biased toward basic and acidic residues. The disordered stretch occupies residues 1–20 (MSRWKDMNKDELERQFSPSQ). The short motif at 84–88 (HGGYW) is the HGGXW element. Residue serine 153 is the Nucleophile of the active site. Active-site residues include aspartate 236 and histidine 269.

It belongs to the kynurenine formamidase family. As to quaternary structure, homodimer.

The protein localises to the cytoplasm. The protein resides in the cytosol. It is found in the nucleus. It carries out the reaction N-formyl-L-kynurenine + H2O = L-kynurenine + formate + H(+). The protein operates within amino-acid degradation; L-tryptophan degradation via kynurenine pathway; L-kynurenine from L-tryptophan: step 2/2. In terms of biological role, catalyzes the hydrolysis of N-formyl-L-kynurenine to L-kynurenine, the second step in the kynurenine pathway of tryptophan degradation. Kynurenine may be further oxidized to nicotinic acid, NAD(H) and NADP(H). Required for elimination of toxic metabolites. This is Kynurenine formamidase (afmid) from Salmo salar (Atlantic salmon).